The primary structure comprises 549 residues: Glucose-6-phosphate isomerase 1 (549 aa).

The active-site Proton donor is Glu-358. Active-site residues include His-389 and Lys-513.

Belongs to the GPI family.

It localises to the cytoplasm. It catalyses the reaction alpha-D-glucose 6-phosphate = beta-D-fructose 6-phosphate. It participates in carbohydrate biosynthesis; gluconeogenesis. The protein operates within carbohydrate degradation; glycolysis; D-glyceraldehyde 3-phosphate and glycerone phosphate from D-glucose: step 2/4. In terms of biological role, catalyzes the reversible isomerization of glucose-6-phosphate to fructose-6-phosphate. The chain is Glucose-6-phosphate isomerase 1 from Streptomyces avermitilis (strain ATCC 31267 / DSM 46492 / JCM 5070 / NBRC 14893 / NCIMB 12804 / NRRL 8165 / MA-4680).